The sequence spans 500 residues: Cysteine-rich secretory protein LCCL domain-containing 1 (500 aa).

Residues 1–23 (MMCKAQEWLRVTALLFVARAVPA) form the signal peptide. Positions 66 to 206 (LDLHNKLRSQ…PKAVYLVCNY (141 aa)) constitute an SCP domain. The tract at residues 258-281 (EIERQQSQVHDTHVRTRSDDSDRN) is disordered. LCCL domains lie at 289 to 384 (MSQI…ANSF) and 390 to 492 (TVQA…TGGK). Disulfide bonds link C295/C313, C317/C337, C396/C418, and C422/C445.

Belongs to the CRISP family.

The protein resides in the secreted. In Mus musculus (Mouse), this protein is Cysteine-rich secretory protein LCCL domain-containing 1 (Crispld1).